The following is a 312-amino-acid chain: Cytochrome c biogenesis protein CcsA (312 aa).

Transmembrane regions (helical) follow at residues 12 to 32, 47 to 67, 72 to 92, 98 to 118, 144 to 164, 220 to 240, 254 to 271, and 281 to 301; these read NLVFGILLFAMTIYWISLSFF, IVANILLFFILGSRWIVAGYF, LYESLLFLTWTLLTIYLYVEF, LVGAILIPVALLINGFANLTL, MMLSYGTLIMGSLLCILFLVI, IIGLGFPFLTIGIIAGGVWAN, TWALITWIVFATYLHSRI, and AILGGLGFFVIWICYLGVNFL.

The protein belongs to the CcmF/CycK/Ccl1/NrfE/CcsA family. In terms of assembly, may interact with Ccs1.

The protein localises to the plastid. Its subcellular location is the chloroplast thylakoid membrane. Its function is as follows. Required during biogenesis of c-type cytochromes (cytochrome c6 and cytochrome f) at the step of heme attachment. The protein is Cytochrome c biogenesis protein CcsA of Trieres chinensis (Marine centric diatom).